A 442-amino-acid chain; its full sequence is Methionine aminopeptidase 2-1 (442 aa).

The tract at residues 1–92 is disordered; it reads MAAQASEELE…ISELFPNNQY (92 aa). Polar residues predominate over residues 15-25; sequence NGQNGHAQEQV. Residues 30 to 47 are compositionally biased toward acidic residues; that stretch reads EAADNDDSEDDEKEEEGG. Residues 56–72 are compositionally biased toward basic residues; it reads AKKKKKRKPKKKKKGGA. His-195 is a substrate binding site. A divalent metal cation-binding residues include Asp-215, Asp-226, and His-295. His-303 contacts substrate. A divalent metal cation contacts are provided by Glu-328 and Glu-423.

Belongs to the peptidase M24A family. Methionine aminopeptidase eukaryotic type 2 subfamily. Co(2+) is required as a cofactor. It depends on Zn(2+) as a cofactor. Mn(2+) serves as cofactor. Requires Fe(2+) as cofactor.

It is found in the cytoplasm. The enzyme catalyses Release of N-terminal amino acids, preferentially methionine, from peptides and arylamides.. Its function is as follows. Cotranslationally removes the N-terminal methionine from nascent proteins. The N-terminal methionine is often cleaved when the second residue in the primary sequence is small and uncharged (Met-Ala-, Cys, Gly, Pro, Ser, Thr, or Val). This chain is Methionine aminopeptidase 2-1, found in Talaromyces marneffei (strain ATCC 18224 / CBS 334.59 / QM 7333) (Penicillium marneffei).